The primary structure comprises 782 residues: MVKFSKELEAQLIPEWKEAFVNYCLLKKQIKKIKTSRKPKPASHYPIGHHSDFGRSLFDPVRKLARTFSDKLFSNSEKPEILQVRRRRGSSETGDDVDEIYQTELVQLFSEEDEVKVFFARLDEELNKVNQFHKPKETEFLERGEILKKQLETLAELKQILSDRKKRNLSGSNSHRSFSSSVRNSDFSAGSPGELSEIQSETSRTDEIIEALERNGVSFINSATRSKTKGGKPKMSLRVDIPDAVAGAEGGIARSIATAMSVLWEELVNNPRSDFTNWKNIQSAEKKIRSAFVELYRGLGLLKTYSSLNMIAFTKIMKKFDKVAGQNASSTYLKVVKRSQFISSDKVVRLMDEVESIFTKHFANNDRKKAMKFLKPHQTKDSHMVTFFVGLFTGCFISLFVIYIILAHLSGIFTSSDQVSYLETVYPVFSVFALLSLHMFMYGCNLYMWKNTRINYTFIFEFAPNTALRYRDAFLMGTTFMTSVVAAMVIHLILRASGFSASQVDTIPGILLLIFICVLICPFNTFYRPTRFCFIRILRKIVCSPFYKVLMVDFFMGDQLTSQIPLLRHLETTGCYFLAQSFKTHEYNTCKNGRYYREFAYLISFLPYFWRAMQCVRRWWDESNPDHLINMGKYVSAMVAAGVRITYARENNDLWLTMVLVSSVVATIYQLYWDFVKDWGLLNPKSKNPWLRDNLVLRNKNFYYLSIALNLVLRVAWIETIMRFRVSPVQSHLLDFFLASLEVIRRGHWNFYRVENEHLNNVGQFRAVKTVPLPFLDRDSDG.

The Cytoplasmic segment spans residues 1 to 386 (MVKFSKELEA…HQTKDSHMVT (386 aa)). The region spanning 2–334 (VKFSKELEAQ…GQNASSTYLK (333 aa)) is the SPX domain. Residues 165–202 (KKRNLSGSNSHRSFSSSVRNSDFSAGSPGELSEIQSET) form a disordered region. A compositionally biased stretch (low complexity) spans 170–188 (SGSNSHRSFSSSVRNSDFS). An important for inositol polyphosphate binding region spans residues 315-322 (KIMKKFDK). Residues 387 to 407 (FFVGLFTGCFISLFVIYIILA) form a helical membrane-spanning segment. Topologically, residues 408-423 (HLSGIFTSSDQVSYLE) are lumenal. Residues 424-444 (TVYPVFSVFALLSLHMFMYGC) form a helical membrane-spanning segment. Topologically, residues 445 to 473 (NLYMWKNTRINYTFIFEFAPNTALRYRDA) are cytoplasmic. The helical transmembrane segment at 474–494 (FLMGTTFMTSVVAAMVIHLIL) threads the bilayer. The Lumenal segment spans residues 495–506 (RASGFSASQVDT). Residues 507–527 (IPGILLLIFICVLICPFNTFY) form a helical membrane-spanning segment. At 528–593 (RPTRFCFIRI…THEYNTCKNG (66 aa)) the chain is on the cytoplasmic side. In terms of domain architecture, EXS spans 591 to 782 (KNGRYYREFA…LPFLDRDSDG (192 aa)). A helical transmembrane segment spans residues 594-614 (RYYREFAYLISFLPYFWRAMQ). The Lumenal segment spans residues 615 to 619 (CVRRW). A helical transmembrane segment spans residues 620–639 (WDESNPDHLINMGKYVSAMV). Over 640-782 (AAGVRITYAR…LPFLDRDSDG (143 aa)) the chain is Cytoplasmic.

Belongs to the SYG1 (TC 2.A.94) family. In terms of assembly, interacts with PHO2. PHO1 degradation is PHO2 dependent and involves multivesicular body-mediated vacuolar proteolysis. As to expression, predominantly in roots, but also weak expression in the lower part of the hypocotyl. In the stellar cells, including the pericycle and xylem parenchyma cells, but not in the cortical or epidermal cells. Expressed in guard cells.

Its subcellular location is the golgi apparatus membrane. It localises to the golgi apparatus. The protein resides in the trans-Golgi network membrane. The protein localises to the endoplasmic reticulum membrane. In terms of biological role, inositol polyphosphate sensor that associates with transcription factors to regulate inorganic phosphate (Pi) starvation responses. Probably acts by binding inositol polyphosphate via its SPX domain. Acts as a Pi exporter, mediating efflux of Pi out of cells. Transfers Pi from the epidermal and cortical cells to the root xylem vessels. Involved in the transfer of Pi from roots to shoots. Involved in abscisic acid (ABA) induction of stomatal closure and ABA repression of stomatal opening. In Arabidopsis thaliana (Mouse-ear cress), this protein is Phosphate transporter PHO1.